The chain runs to 270 residues: L-cystine-binding protein TcyK (270 aa).

The first 20 residues, methionine 1–alanine 20, serve as a signal peptide directing secretion. Residue cysteine 21 is the site of N-palmitoyl cysteine attachment. Residue cysteine 21 is the site of S-diacylglycerol cysteine attachment.

This sequence belongs to the bacterial solute-binding protein 3 family. As to quaternary structure, the complex is composed of two ATP-binding proteins (TcyN), two transmembrane proteins (TcyL and TcyM) and two solute-binding proteins (TcyJ and TcyK).

Its subcellular location is the cell membrane. Functionally, part of the ABC transporter complex TcyJKLMN involved in L-cystine import. Is also involved in cystathionine, djenkolate, and S-methylcysteine transport. This Bacillus subtilis (strain 168) protein is L-cystine-binding protein TcyK (tcyK).